The following is a 379-amino-acid chain: Homoserine O-succinyltransferase (379 aa).

An AB hydrolase-1 domain is found at 48–357; it reads NAVLICHALS…SAHGHDAFLM (310 aa). Ser154 acts as the Nucleophile in catalysis. Residue Arg224 coordinates substrate. Residues Asp319 and His352 contribute to the active site. Asp353 lines the substrate pocket.

This sequence belongs to the AB hydrolase superfamily. MetX family. Homodimer.

It is found in the cytoplasm. It catalyses the reaction L-homoserine + succinyl-CoA = O-succinyl-L-homoserine + CoA. It functions in the pathway amino-acid biosynthesis; L-methionine biosynthesis via de novo pathway; O-succinyl-L-homoserine from L-homoserine: step 1/1. Functionally, transfers a succinyl group from succinyl-CoA to L-homoserine, forming succinyl-L-homoserine. This Neisseria meningitidis serogroup A / serotype 4A (strain DSM 15465 / Z2491) protein is Homoserine O-succinyltransferase.